A 413-amino-acid polypeptide reads, in one-letter code: uncharacterized protein (413 aa).

This is an uncharacterized protein from Mycobacterium tuberculosis (strain CDC 1551 / Oshkosh).